Consider the following 267-residue polypeptide: Urease accessory protein UreD (267 aa).

This sequence belongs to the UreD family. UreD, UreF and UreG form a complex that acts as a GTP-hydrolysis-dependent molecular chaperone, activating the urease apoprotein by helping to assemble the nickel containing metallocenter of UreC. The UreE protein probably delivers the nickel.

Its subcellular location is the cytoplasm. Required for maturation of urease via the functional incorporation of the urease nickel metallocenter. In Synechococcus sp. (strain JA-2-3B'a(2-13)) (Cyanobacteria bacterium Yellowstone B-Prime), this protein is Urease accessory protein UreD.